Reading from the N-terminus, the 614-residue chain is DNA mismatch repair protein MutL (614 aa).

Belongs to the DNA mismatch repair MutL/HexB family.

This protein is involved in the repair of mismatches in DNA. It is required for dam-dependent methyl-directed DNA mismatch repair. May act as a 'molecular matchmaker', a protein that promotes the formation of a stable complex between two or more DNA-binding proteins in an ATP-dependent manner without itself being part of a final effector complex. This Leptospira biflexa serovar Patoc (strain Patoc 1 / ATCC 23582 / Paris) protein is DNA mismatch repair protein MutL.